Consider the following 403-residue polypeptide: Methylthioribose-1-phosphate isomerase (403 aa).

The Proton donor role is filled by D277.

The protein belongs to the eIF-2B alpha/beta/delta subunits family. MtnA subfamily.

The protein localises to the cytoplasm. It localises to the nucleus. The catalysed reaction is 5-(methylsulfanyl)-alpha-D-ribose 1-phosphate = 5-(methylsulfanyl)-D-ribulose 1-phosphate. It functions in the pathway amino-acid biosynthesis; L-methionine biosynthesis via salvage pathway; L-methionine from S-methyl-5-thio-alpha-D-ribose 1-phosphate: step 1/6. Catalyzes the interconversion of methylthioribose-1-phosphate (MTR-1-P) into methylthioribulose-1-phosphate (MTRu-1-P). This is Methylthioribose-1-phosphate isomerase from Lodderomyces elongisporus (strain ATCC 11503 / CBS 2605 / JCM 1781 / NBRC 1676 / NRRL YB-4239) (Yeast).